Consider the following 554-residue polypeptide: CTP synthase (554 aa).

Residues 1-265 form an amidoligase domain region; that stretch reads MTPLIFVTGG…DEIVVNQLKL (265 aa). Ser-13 is a binding site for CTP. UTP is bound at residue Ser-13. Residues 14 to 19 and Asp-71 each bind ATP; that span reads SLGKGI. Mg(2+)-binding residues include Asp-71 and Glu-139. Residues 146-148, 186-191, and Lys-222 contribute to the CTP site; these read DIE and KTKPTQ. Residues 186-191 and Lys-222 each bind UTP; that span reads KTKPTQ. The 254-residue stretch at 292 to 545 folds into the Glutamine amidotransferase type-1 domain; sequence TIAVVGKYVD…IRAARERKAG (254 aa). Gly-353 lines the L-glutamine pocket. Cys-380 serves as the catalytic Nucleophile; for glutamine hydrolysis. Residues 381-384, Glu-404, and Arg-471 each bind L-glutamine; that span reads YGMQ. Active-site residues include His-518 and Glu-520.

The protein belongs to the CTP synthase family. As to quaternary structure, homotetramer.

The enzyme catalyses UTP + L-glutamine + ATP + H2O = CTP + L-glutamate + ADP + phosphate + 2 H(+). It catalyses the reaction L-glutamine + H2O = L-glutamate + NH4(+). The catalysed reaction is UTP + NH4(+) + ATP = CTP + ADP + phosphate + 2 H(+). It participates in pyrimidine metabolism; CTP biosynthesis via de novo pathway; CTP from UDP: step 2/2. With respect to regulation, allosterically activated by GTP, when glutamine is the substrate; GTP has no effect on the reaction when ammonia is the substrate. The allosteric effector GTP functions by stabilizing the protein conformation that binds the tetrahedral intermediate(s) formed during glutamine hydrolysis. Inhibited by the product CTP, via allosteric rather than competitive inhibition. Functionally, catalyzes the ATP-dependent amination of UTP to CTP with either L-glutamine or ammonia as the source of nitrogen. Regulates intracellular CTP levels through interactions with the four ribonucleotide triphosphates. The chain is CTP synthase from Stenotrophomonas maltophilia (strain R551-3).